The primary structure comprises 590 residues: MSATHIENRDDSFLENKGIDHIGRPENNNGSQEPPSPSGFGGHLIDENLVRVEGEDKVTWYLCFLISASAIAGFLFGYDTGVVGVALPLVGTDLGGSALNSSQQEIITAGTTIGAIFGSAILGGWGDRLGRKGAILVSDVFFTIGAVIIASSYSVPQIIVGRIILGIGVGGAAVIAPLFITETAPTAVRGRCIGVNAFFIPFGQVVSDAIGAGVQNMHNGWRLLFALGAVPSLLQLLLFHYLPESPRILILKGDTEGARTVFQRIYPTATSEMIEYKFRVAHEYIAATTALQSGTTFWERVKKVLKTGSYRRSIIAVSALQAAGQLTGFNTLLYYAGTLFGLLGLSNPALGGLIPAGTNAVFVLIGMSLVDKVGRRGLLLIGVPIMLLGHVWNIVSFYYMCKPTGGFLDTSYSYDTTDVGIVIGGIVFFVVGYGLTYSHLVWYQAEYLTLEVRSMGSGIATTVCWIANLVVSVSYLSELETMTPSGTYGFYFGISVIGFVFLVFCLPETKQLSIDETSLLFEDDWGVKRSAQMRKERRETRKRLQDAELGEAATAHLEARQQKSTSVSPAELSKFMAGLKGGKRTPSASV.

The Cytoplasmic segment spans residues 1 to 57; the sequence is MSATHIENRDDSFLENKGIDHIGRPENNNGSQEPPSPSGFGGHLIDENLVRVEGEDK. Residues 15-24 are compositionally biased toward basic and acidic residues; sequence ENKGIDHIGR. A disordered region spans residues 15 to 40; sequence ENKGIDHIGRPENNNGSQEPPSPSGF. A helical transmembrane segment spans residues 58–78; sequence VTWYLCFLISASAIAGFLFGY. Residues 79-105 are Extracellular-facing; that stretch reads DTGVVGVALPLVGTDLGGSALNSSQQE. N-linked (GlcNAc...) asparagine glycosylation is present at Asn-100. A helical membrane pass occupies residues 106-126; that stretch reads IITAGTTIGAIFGSAILGGWG. Residues 127–132 are Cytoplasmic-facing; that stretch reads DRLGRK. The chain crosses the membrane as a helical span at residues 133 to 153; the sequence is GAILVSDVFFTIGAVIIASSY. At 154-157 the chain is on the extracellular side; sequence SVPQ. The helical transmembrane segment at 158–178 threads the bilayer; it reads IIVGRIILGIGVGGAAVIAPL. Residues 179–192 lie on the Cytoplasmic side of the membrane; that stretch reads FITETAPTAVRGRC. Residues 193–213 traverse the membrane as a helical segment; it reads IGVNAFFIPFGQVVSDAIGAG. The Extracellular portion of the chain corresponds to 214 to 222; it reads VQNMHNGWR. The chain crosses the membrane as a helical span at residues 223–243; the sequence is LLFALGAVPSLLQLLLFHYLP. The Cytoplasmic portion of the chain corresponds to 244–325; sequence ESPRILILKG…AVSALQAAGQ (82 aa). A helical transmembrane segment spans residues 326-346; sequence LTGFNTLLYYAGTLFGLLGLS. Residues 347 to 349 lie on the Extracellular side of the membrane; the sequence is NPA. The helical transmembrane segment at 350–370 threads the bilayer; that stretch reads LGGLIPAGTNAVFVLIGMSLV. Over 371 to 376 the chain is Cytoplasmic; sequence DKVGRR. A helical transmembrane segment spans residues 377–397; sequence GLLLIGVPIMLLGHVWNIVSF. Residues 398–420 lie on the Extracellular side of the membrane; sequence YYMCKPTGGFLDTSYSYDTTDVG. A helical transmembrane segment spans residues 421-441; sequence IVIGGIVFFVVGYGLTYSHLV. At 442-455 the chain is on the cytoplasmic side; sequence WYQAEYLTLEVRSM. The chain crosses the membrane as a helical span at residues 456-476; it reads GSGIATTVCWIANLVVSVSYL. Residues 477–485 lie on the Extracellular side of the membrane; that stretch reads SELETMTPS. A helical transmembrane segment spans residues 486 to 506; it reads GTYGFYFGISVIGFVFLVFCL. The Cytoplasmic portion of the chain corresponds to 507-590; that stretch reads PETKQLSIDE…GGKRTPSASV (84 aa).

Belongs to the major facilitator superfamily. Sugar transporter (TC 2.A.1.1) family.

The protein resides in the cell membrane. The enzyme catalyses myo-inositol(out) + H(+)(out) = myo-inositol(in) + H(+)(in). Its function is as follows. Transporter for myo-inositol. In Cryptococcus neoformans var. grubii serotype A (strain H99 / ATCC 208821 / CBS 10515 / FGSC 9487) (Filobasidiella neoformans var. grubii), this protein is Myo-inositol transporter 3A (ITR3A).